Here is a 117-residue protein sequence, read N- to C-terminus: Large ribosomal subunit protein bL19 (117 aa).

This sequence belongs to the bacterial ribosomal protein bL19 family.

Its function is as follows. This protein is located at the 30S-50S ribosomal subunit interface and may play a role in the structure and function of the aminoacyl-tRNA binding site. The protein is Large ribosomal subunit protein bL19 of Desulfotalea psychrophila (strain LSv54 / DSM 12343).